A 184-amino-acid chain; its full sequence is Oocyte-secreted protein 4A (184 aa).

The signal sequence occupies residues methionine 1–glycine 19. N-linked (GlcNAc...) asparagine glycosylation occurs at asparagine 128.

This sequence belongs to the PLAC1 family.

The protein localises to the secreted. The polypeptide is Oocyte-secreted protein 4A (Homo sapiens (Human)).